The chain runs to 143 residues: Antiholin-like protein LrgA (143 aa).

The next 4 membrane-spanning stretches (helical) occupy residues 6-26 (VYSF…SNII), 30-50 (LPIP…LLCL), 61-81 (LGTA…ISVI), and 97-117 (VIVV…QFIL).

This sequence belongs to the CidA/LrgA family. LrgA subfamily.

The protein resides in the cell membrane. In terms of biological role, inhibits the expression or activity of extracellular murein hydrolases by interacting, possibly with LrgB, with the holin-like protein CidA. The LrgAB and CidA proteins may affect the proton motive force of the membrane. May be involved in programmed cell death (PCD), possibly triggering PCD in response to antibiotics and environmental stresses. This Bacillus anthracis (strain A0248) protein is Antiholin-like protein LrgA.